The chain runs to 258 residues: Acyl-[acyl-carrier-protein]--UDP-N-acetylglucosamine O-acyltransferase (258 aa).

The protein belongs to the transferase hexapeptide repeat family. LpxA subfamily. As to quaternary structure, homotrimer.

The protein resides in the cytoplasm. The enzyme catalyses a (3R)-hydroxyacyl-[ACP] + UDP-N-acetyl-alpha-D-glucosamine = a UDP-3-O-[(3R)-3-hydroxyacyl]-N-acetyl-alpha-D-glucosamine + holo-[ACP]. It participates in glycolipid biosynthesis; lipid IV(A) biosynthesis; lipid IV(A) from (3R)-3-hydroxytetradecanoyl-[acyl-carrier-protein] and UDP-N-acetyl-alpha-D-glucosamine: step 1/6. In terms of biological role, involved in the biosynthesis of lipid A, a phosphorylated glycolipid that anchors the lipopolysaccharide to the outer membrane of the cell. The polypeptide is Acyl-[acyl-carrier-protein]--UDP-N-acetylglucosamine O-acyltransferase (Myxococcus xanthus (strain DK1622)).